A 207-amino-acid polypeptide reads, in one-letter code: Small ribosomal subunit protein uS4c (207 aa).

The segment at 20-52 is disordered; sequence GFSKKIDRNHTPPGQHGWKKKASDQKKSKESQY. Residues 40–52 show a composition bias toward basic and acidic residues; it reads KASDQKKSKESQY. Residues 97-158 form the S4 RNA-binding domain; sequence MRLDNIIYRL…NSQQLIKNYL (62 aa).

Belongs to the universal ribosomal protein uS4 family. Part of the 30S ribosomal subunit. Contacts protein S5. The interaction surface between S4 and S5 is involved in control of translational fidelity.

The protein localises to the plastid. Its function is as follows. One of the primary rRNA binding proteins, it binds directly to 16S rRNA where it nucleates assembly of the body of the 30S subunit. In terms of biological role, with S5 and S12 plays an important role in translational accuracy. The sequence is that of Small ribosomal subunit protein uS4c (rps4) from Prototheca wickerhamii.